Consider the following 456-residue polypeptide: tRNA-2-methylthio-N(6)-dimethylallyladenosine synthase (456 aa).

The region spanning 6–125 (KRLFIKTYGC…LPELIAQAHR (120 aa)) is the MTTase N-terminal domain. The [4Fe-4S] cluster site is built by cysteine 15, cysteine 51, cysteine 88, cysteine 163, cysteine 167, and cysteine 170. Residues 149–385 (QVEGYSAFVT…QELLSDQQAA (237 aa)) enclose the Radical SAM core domain. Residues 388-450 (ESMIGRTLPV…RNSLSGSLTG (63 aa)) form the TRAM domain.

This sequence belongs to the methylthiotransferase family. MiaB subfamily. As to quaternary structure, monomer. [4Fe-4S] cluster is required as a cofactor.

It is found in the cytoplasm. It catalyses the reaction N(6)-dimethylallyladenosine(37) in tRNA + (sulfur carrier)-SH + AH2 + 2 S-adenosyl-L-methionine = 2-methylsulfanyl-N(6)-dimethylallyladenosine(37) in tRNA + (sulfur carrier)-H + 5'-deoxyadenosine + L-methionine + A + S-adenosyl-L-homocysteine + 2 H(+). Its function is as follows. Catalyzes the methylthiolation of N6-(dimethylallyl)adenosine (i(6)A), leading to the formation of 2-methylthio-N6-(dimethylallyl)adenosine (ms(2)i(6)A) at position 37 in tRNAs that read codons beginning with uridine. This Maricaulis maris (strain MCS10) (Caulobacter maris) protein is tRNA-2-methylthio-N(6)-dimethylallyladenosine synthase.